A 325-amino-acid polypeptide reads, in one-letter code: Undecaprenyl-phosphate 4-deoxy-4-formamido-L-arabinose transferase (325 aa).

2 consecutive transmembrane segments (helical) span residues 236–256 (LSIF…LLIL) and 270–290 (VFTL…GMGL).

It belongs to the glycosyltransferase 2 family.

The protein localises to the cell inner membrane. The catalysed reaction is UDP-4-deoxy-4-formamido-beta-L-arabinose + di-trans,octa-cis-undecaprenyl phosphate = 4-deoxy-4-formamido-alpha-L-arabinopyranosyl di-trans,octa-cis-undecaprenyl phosphate + UDP. The protein operates within glycolipid biosynthesis; 4-amino-4-deoxy-alpha-L-arabinose undecaprenyl phosphate biosynthesis; 4-amino-4-deoxy-alpha-L-arabinose undecaprenyl phosphate from UDP-4-deoxy-4-formamido-beta-L-arabinose and undecaprenyl phosphate: step 1/2. Its pathway is bacterial outer membrane biogenesis; lipopolysaccharide biosynthesis. Its function is as follows. Catalyzes the transfer of 4-deoxy-4-formamido-L-arabinose from UDP to undecaprenyl phosphate. The modified arabinose is attached to lipid A and is required for resistance to polymyxin and cationic antimicrobial peptides. The polypeptide is Undecaprenyl-phosphate 4-deoxy-4-formamido-L-arabinose transferase (Edwardsiella ictaluri (strain 93-146)).